We begin with the raw amino-acid sequence, 314 residues long: 4-hydroxy-3-methylbut-2-enyl diphosphate reductase (314 aa).

[4Fe-4S] cluster is bound at residue cysteine 12. The (2E)-4-hydroxy-3-methylbut-2-enyl diphosphate site is built by histidine 41 and histidine 74. The dimethylallyl diphosphate site is built by histidine 41 and histidine 74. Isopentenyl diphosphate-binding residues include histidine 41 and histidine 74. Cysteine 96 contributes to the [4Fe-4S] cluster binding site. Position 124 (histidine 124) interacts with (2E)-4-hydroxy-3-methylbut-2-enyl diphosphate. Histidine 124 is a binding site for dimethylallyl diphosphate. Isopentenyl diphosphate is bound at residue histidine 124. Catalysis depends on glutamate 126, which acts as the Proton donor. Threonine 167 provides a ligand contact to (2E)-4-hydroxy-3-methylbut-2-enyl diphosphate. Cysteine 197 is a binding site for [4Fe-4S] cluster. (2E)-4-hydroxy-3-methylbut-2-enyl diphosphate-binding residues include serine 225, serine 226, asparagine 227, and serine 269. Residues serine 225, serine 226, asparagine 227, and serine 269 each contribute to the dimethylallyl diphosphate site. Positions 225, 226, 227, and 269 each coordinate isopentenyl diphosphate.

The protein belongs to the IspH family. Requires [4Fe-4S] cluster as cofactor.

It carries out the reaction isopentenyl diphosphate + 2 oxidized [2Fe-2S]-[ferredoxin] + H2O = (2E)-4-hydroxy-3-methylbut-2-enyl diphosphate + 2 reduced [2Fe-2S]-[ferredoxin] + 2 H(+). It catalyses the reaction dimethylallyl diphosphate + 2 oxidized [2Fe-2S]-[ferredoxin] + H2O = (2E)-4-hydroxy-3-methylbut-2-enyl diphosphate + 2 reduced [2Fe-2S]-[ferredoxin] + 2 H(+). The protein operates within isoprenoid biosynthesis; dimethylallyl diphosphate biosynthesis; dimethylallyl diphosphate from (2E)-4-hydroxy-3-methylbutenyl diphosphate: step 1/1. Its pathway is isoprenoid biosynthesis; isopentenyl diphosphate biosynthesis via DXP pathway; isopentenyl diphosphate from 1-deoxy-D-xylulose 5-phosphate: step 6/6. Catalyzes the conversion of 1-hydroxy-2-methyl-2-(E)-butenyl 4-diphosphate (HMBPP) into a mixture of isopentenyl diphosphate (IPP) and dimethylallyl diphosphate (DMAPP). Acts in the terminal step of the DOXP/MEP pathway for isoprenoid precursor biosynthesis. The polypeptide is 4-hydroxy-3-methylbut-2-enyl diphosphate reductase (Pseudoalteromonas atlantica (strain T6c / ATCC BAA-1087)).